The chain runs to 278 residues: Ribosomal RNA small subunit methyltransferase A (278 aa).

Asparagine 18, leucine 20, glycine 45, glutamate 66, aspartate 89, and asparagine 110 together coordinate S-adenosyl-L-methionine.

The protein belongs to the class I-like SAM-binding methyltransferase superfamily. rRNA adenine N(6)-methyltransferase family. RsmA subfamily.

Its subcellular location is the cytoplasm. It catalyses the reaction adenosine(1518)/adenosine(1519) in 16S rRNA + 4 S-adenosyl-L-methionine = N(6)-dimethyladenosine(1518)/N(6)-dimethyladenosine(1519) in 16S rRNA + 4 S-adenosyl-L-homocysteine + 4 H(+). Functionally, specifically dimethylates two adjacent adenosines (A1518 and A1519) in the loop of a conserved hairpin near the 3'-end of 16S rRNA in the 30S particle. May play a critical role in biogenesis of 30S subunits. In Cupriavidus pinatubonensis (strain JMP 134 / LMG 1197) (Cupriavidus necator (strain JMP 134)), this protein is Ribosomal RNA small subunit methyltransferase A.